A 466-amino-acid polypeptide reads, in one-letter code: Reticulophagy regulator 3 (466 aa).

The disordered stretch occupies residues methionine 1–serine 28. Alanine 2 bears the N-acetylalanine mark. Residues alanine 2–tryptophan 80 are Cytoplasmic-facing. Threonine 10 carries the post-translational modification Phosphothreonine. Phosphoserine is present on serine 26. Residues phenylalanine 81–valine 101 traverse the membrane as a helical segment. Topologically, residues cysteine 102 to lysine 163 are lumenal. Residues glutamine 164–glycine 184 form a helical membrane-spanning segment. At arginine 185 to tyrosine 186 the chain is on the cytoplasmic side. A helical membrane pass occupies residues valine 187–valine 207. Residues tyrosine 208–glutamate 381 are Lumenal-facing. Residues serine 258 and serine 260 each carry the phosphoserine modification. Threonine 283 bears the Phosphothreonine mark. Residues aspartate 284–arginine 374 are disordered. Serine 285, serine 288, serine 293, and serine 303 each carry phosphoserine. The segment covering cysteine 294–threonine 310 has biased composition (polar residues). Phosphothreonine is present on residues threonine 307 and threonine 310. 3 positions are modified to phosphoserine: serine 313, serine 320, and serine 360. The span at leucine 316–proline 331 shows a compositional bias: basic and acidic residues. The helical transmembrane segment at leucine 382–serine 402 threads the bilayer. Over glutamine 403–histidine 466 the chain is Cytoplasmic. The tract at residues glycine 412–histidine 466 is disordered. A compositionally biased stretch (acidic residues) spans leucine 438–aspartate 451. The residue at position 440 (threonine 440) is a Phosphothreonine. Residues aspartate 445 to leucine 450 carry the LIR motif motif. Residues serine 453–histidine 466 are compositionally biased toward polar residues.

Belongs to the RETREG family. Interacts with ATG8 family modifier proteins MAP1LC3A, MAP1LC3B, MAP1LC3C, GABARAP, GABARAPL1 and GABARAPL2. Interacts with CANX. Interacts with RTN4 isoform B.

The protein resides in the endoplasmic reticulum membrane. In terms of biological role, endoplasmic reticulum (ER)-anchored autophagy regulator which exists in an inactive state under basal conditions but is activated following cellular stress. When activated, induces ER fragmentation and mediates ER delivery into lysosomes through sequestration into autophagosomes via interaction with ATG8 family proteins. Promotes ER membrane curvature and ER tubulation required for subsequent ER fragmentation and engulfment into autophagosomes. Required for collagen quality control in a LIR motif-dependent manner. Mediates NRF1-enhanced neurite outgrowth. This chain is Reticulophagy regulator 3, found in Homo sapiens (Human).